A 281-amino-acid polypeptide reads, in one-letter code: Streptomycin biosynthesis protein StrF (281 aa).

The protein operates within antibiotic biosynthesis; streptomycin biosynthesis. Its function is as follows. May be involved in the formation of N-methyl-L-glucosamine. The protein is Streptomycin biosynthesis protein StrF (strF) of Streptomyces griseus.